We begin with the raw amino-acid sequence, 295 residues long: Trimeric intracellular cation channel type A (295 aa).

The Lumenal segment spans residues 1 to 11 (MELLSALSLDD). The helical transmembrane segment at 12 to 32 (LAVAFSKLPVFPLFDVAYYII) threads the bilayer. Over 33–51 (SILYLKYEPGAVDLSKRSP) the chain is Cytoplasmic. Residues 52-72 (VASWLCAMLYCFGSYILADVL) form a helical membrane-spanning segment. Residues 73-84 (LGESPIHYFSNN) lie on the Lumenal side of the membrane. G74 is a Ca(2+) binding site. The helical transmembrane segment at 85–105 (ANILLASAVWYLTFFCPLNIF) threads the bilayer. The Cytoplasmic segment spans residues 106 to 144 (YKIVSFLPLKLVLVGMKEVVRVRKIAMGIHHAHHHYHHG). K122 and R126 together coordinate a 1,2-diacyl-sn-glycero-3-phospho-(1D-myo-inositol-4,5-bisphosphate). A helical membrane pass occupies residues 145-165 (WVIMVLIGWVKGSGVALMSNL). The Lumenal segment spans residues 166–178 (EQLLRGVWKPETN). Residues 179–199 (EILHMSFPTKASLYGAILFTL) traverse the membrane as a helical segment. At 200–201 (QQ) the chain is on the cytoplasmic side. Residues 202 to 222 (AHWLPISKAYLIFFFTLFMAI) traverse the membrane as a helical segment. Topologically, residues 223-233 (CKIYMTATHSH) are lumenal. Residues 234 to 254 (GSPFAIFESGICCVLFGAANG) traverse the membrane as a helical segment. The Cytoplasmic portion of the chain corresponds to 255-295 (DHDDHGDHHHHHDDHDVSHSTVKSKEELNEGTRKRKTKKAE). Over residues 259-286 (HGDHHHHHDDHDVSHSTVKSKEELNEGT) the composition is skewed to basic and acidic residues. The disordered stretch occupies residues 259-295 (HGDHHHHHDDHDVSHSTVKSKEELNEGTRKRKTKKAE).

Belongs to the TMEM38 family. As to quaternary structure, homotrimer; conformation seems to be controled by binding to diacylglycerol (DAG).

The protein localises to the sarcoplasmic reticulum membrane. The protein resides in the nucleus membrane. The catalysed reaction is K(+)(in) = K(+)(out). With respect to regulation, channel activity is activated by a change of voltage within the sarcoplasmic reticulum lumen and blocked by luminal high Ca(2+) levels. Functionally, intracellular monovalent cation channel required for maintenance of rapid intracellular calcium release. Acts as a potassium counter-ion channel that functions in synchronization with calcium release from intracellular stores. Opened by a change of voltage within the sarcoplasmic reticulum lumen. In Xenopus tropicalis (Western clawed frog), this protein is Trimeric intracellular cation channel type A (tmem38a).